The primary structure comprises 581 residues: Arginine--tRNA ligase (581 aa).

A 'HIGH' region motif is present at residues 131-141; sequence ANPTGPMHVGH.

Belongs to the class-I aminoacyl-tRNA synthetase family. Monomer.

The protein resides in the cytoplasm. The enzyme catalyses tRNA(Arg) + L-arginine + ATP = L-arginyl-tRNA(Arg) + AMP + diphosphate. In Paracoccus denitrificans (strain Pd 1222), this protein is Arginine--tRNA ligase.